A 952-amino-acid polypeptide reads, in one-letter code: Bromodomain testis-specific protein (952 aa).

One can recognise a Bromo 1 domain in the interval Arg-26 to Met-132. Basic and acidic residues predominate over residues Gly-141 to Gln-150. The interval Gly-141 to Glu-168 is disordered. The span at Gln-151 to Ala-167 shows a compositional bias: polar residues. Ser-186 carries the phosphoserine modification. The Nuclear localization signal motif lies at Lys-208–Pro-219. Residues Gly-209–Gln-257 are disordered. Low complexity predominate over residues Thr-216 to Glu-229. Positions Val-266 to Ile-375 constitute a Bromo 2 domain. 4 disordered regions span residues Ser-392 to Gln-420, Val-442 to Pro-504, Gln-607 to Val-746, and Lys-850 to Ala-930. Residues Glu-417–Val-442 adopt a coiled-coil conformation. Residues Arg-445–Val-463 are compositionally biased toward basic residues. An NET domain is found at Lys-495–Pro-577. Residues Cys-610–Ala-619 show a composition bias toward basic residues. Over residues Pro-625–Glu-638 the composition is skewed to pro residues. Residues Ser-646 to Ser-681 are compositionally biased toward low complexity. Positions Ser-718–Gly-729 are enriched in polar residues. A coiled-coil region spans residues Glu-837 to Asp-936. Over residues Lys-850 to Arg-867 the composition is skewed to basic and acidic residues. Residues Thr-874–Gln-883 show a composition bias toward polar residues. Over residues Glu-893 to Glu-902 the composition is skewed to low complexity. A compositionally biased stretch (basic and acidic residues) spans Leu-911 to Ala-930.

Belongs to the BET family. As to quaternary structure, interacts with the acetylated N-terminus of histone H1, H2, H3 and H4. Interacts with P-TEFb components CDK9 and CCNT1/cyclin-T1. Interacts with mRNA splicing machinery proteins SRSF2, DDX5, HNRNPK and TARDBP. Interacts with SMARCE1. Ubiquitinated in a SPOP-dependent manner, leading to proteasomal degradation.

Its subcellular location is the nucleus. Testis-specific chromatin protein that specifically binds histone H4 acetylated at 'Lys-5' and 'Lys-8' (H4K5ac and H4K8ac, respectively) and plays a key role in spermatogenesis. Required in late pachytene spermatocytes: plays a role in meiotic and post-meiotic cells by binding to acetylated histones at the promoter of specific meiotic and post-meiotic genes, facilitating their activation at the appropriate time. In the post-meiotic phase of spermatogenesis, binds to hyperacetylated histones and participates in their general removal from DNA. Also recognizes and binds a subset of butyrylated histones: able to bind histone H4 butyrylated at 'Lys-8' (H4K8ac), while it is not able to bind H4 butyrylated at 'Lys-5' (H4K5ac). Also acts as a component of the splicing machinery in pachytene spermatocytes and round spermatids and participates in 3'-UTR truncation of specific mRNAs in post-meiotic spermatids. Required for chromocenter organization, a structure comprised of peri-centromeric heterochromatin. The polypeptide is Bromodomain testis-specific protein (Brdt) (Rattus norvegicus (Rat)).